A 273-amino-acid polypeptide reads, in one-letter code: Large ribosomal subunit protein uL2cy (273 aa).

Disordered stretches follow at residues 1–27 (MAIHLYKTSTPSTRNGAVDSQVKSNPR) and 224–273 (NPVD…RRRK).

The protein belongs to the universal ribosomal protein uL2 family. As to quaternary structure, part of the 50S ribosomal subunit.

The protein resides in the plastid. Its subcellular location is the chloroplast. This Liriodendron tulipifera (Tuliptree) protein is Large ribosomal subunit protein uL2cy (rpl2-B).